The following is a 118-amino-acid chain: Small ribosomal subunit protein uS13 (118 aa).

The disordered stretch occupies residues R93–K118.

Belongs to the universal ribosomal protein uS13 family. Part of the 30S ribosomal subunit. Forms a loose heterodimer with protein S19. Forms two bridges to the 50S subunit in the 70S ribosome.

Located at the top of the head of the 30S subunit, it contacts several helices of the 16S rRNA. In the 70S ribosome it contacts the 23S rRNA (bridge B1a) and protein L5 of the 50S subunit (bridge B1b), connecting the 2 subunits; these bridges are implicated in subunit movement. Contacts the tRNAs in the A and P-sites. This Pseudomonas fluorescens (strain Pf0-1) protein is Small ribosomal subunit protein uS13.